A 1049-amino-acid chain; its full sequence is Solvent-resistant pump membrane transporter SrpB (1049 aa).

12 helical membrane-spanning segments follow: residues 10 to 30, 339 to 359, 366 to 386, 392 to 412, 440 to 460, 470 to 490, 542 to 562, 871 to 891, 895 to 915, 927 to 947, 973 to 993, and 1008 to 1028; these read IFAW…LAKM, SVVH…YLFL, LIPT…LPYF, VLTM…AIVV, GALV…AFFG, FAIT…VFTP, LAFL…PKAF, APLL…ALYE, VPVS…LATL, VGLM…VEFA, ILMT…ASGA, and GMIT…VVVV.

The protein belongs to the resistance-nodulation-cell division (RND) (TC 2.A.6) family.

Its subcellular location is the cell inner membrane. Functionally, the inner membrane transporter component of an organic solvent efflux pump. Involved in export of a number of low log POW compounds including hexane (log POW 3.5), toluene (log POW 2.5) and dimethylphthalate (log POW 2.3). The solvent resistance phenotype has been postulated to depend on the operon expression level. This Pseudomonas putida (Arthrobacter siderocapsulatus) protein is Solvent-resistant pump membrane transporter SrpB (srpB).